Here is a 603-residue protein sequence, read N- to C-terminus: Glutamyl-tRNA(Gln) amidotransferase subunit E (603 aa).

Belongs to the GatB/GatE family. GatE subfamily. Heterodimer of GatD and GatE.

The catalysed reaction is L-glutamyl-tRNA(Gln) + L-glutamine + ATP + H2O = L-glutaminyl-tRNA(Gln) + L-glutamate + ADP + phosphate + H(+). Allows the formation of correctly charged Gln-tRNA(Gln) through the transamidation of misacylated Glu-tRNA(Gln) in organisms which lack glutaminyl-tRNA synthetase. The reaction takes place in the presence of glutamine and ATP through an activated gamma-phospho-Glu-tRNA(Gln). The GatDE system is specific for glutamate and does not act on aspartate. In Thermoplasma acidophilum (strain ATCC 25905 / DSM 1728 / JCM 9062 / NBRC 15155 / AMRC-C165), this protein is Glutamyl-tRNA(Gln) amidotransferase subunit E.